A 277-amino-acid polypeptide reads, in one-letter code: uncharacterized protein (277 aa).

Transmembrane regions (helical) follow at residues 46 to 66 (IAAI…YGGL), 73 to 93 (LFEG…ILWM), 143 to 163 (TTVI…VLIL), 174 to 194 (FFYA…GYGT), and 228 to 248 (KGLI…MEWV).

The protein belongs to the oxidase-dependent Fe transporter (OFeT) (TC 9.A.10.1) family.

It is found in the cell membrane. This is an uncharacterized protein from Archaeoglobus fulgidus (strain ATCC 49558 / DSM 4304 / JCM 9628 / NBRC 100126 / VC-16).